The chain runs to 30 residues: 2-enoate reductase (30 aa).

As to quaternary structure, dodecamer; tetramer of trimers. Iron-sulfur cluster serves as cofactor. The cofactor is FAD. It depends on FMN as a cofactor.

It catalyses the reaction butanoate + NAD(+) = (2E)-2-butenoate + NADH + H(+). Its function is as follows. Involved in fermentation of amino acids (Stickland reaction) such as leucine, isoleucine, valine and phenylalanine. The polypeptide is 2-enoate reductase (Clostridium tyrobutyricum).